The primary structure comprises 478 residues: NADH oxidase (478 aa).

FAD is bound by residues 8–12 (GINHA), Asp33, Cys43, Val80, 111–114 (ASGA), Lys149, and Tyr177. The Proton acceptor role is filled by His11. Cys43 acts as the Redox-active in catalysis. At Cys43 the chain carries Cysteine sulfinic acid (-SO2H). NAD(+) is bound by residues 170-185 (VAIV…LAEA), Asp197, and Gly264. FAD-binding positions include 295-305 (LNHKDVYVIGG), Leu322, Ala323, and Thr324. An NAD(+)-binding site is contributed by Ala353. Phe450 contributes to the FAD binding site.

The protein belongs to the class-III pyridine nucleotide-disulfide oxidoreductase family. The cofactor is FAD.

The enzyme catalyses 2 NADH + O2 + 2 H(+) = 2 NAD(+) + 2 H2O. Catalyzes the four-electron reduction of molecular oxygen to water. The sequence is that of NADH oxidase (nox) from Mycoplasma genitalium (strain ATCC 33530 / DSM 19775 / NCTC 10195 / G37) (Mycoplasmoides genitalium).